The following is a 485-amino-acid chain: Adenosylhomocysteinase (485 aa).

Substrate-binding residues include Thr-60, Asp-146, and Glu-208. Position 209 to 211 (209 to 211 (TTT)) interacts with NAD(+). Residues Lys-238 and Asp-242 each coordinate substrate. NAD(+) contacts are provided by residues Asn-243, 272 to 277 (GYGDVG), Glu-295, Asn-330, 351 to 353 (IGH), and Asn-399.

It belongs to the adenosylhomocysteinase family. Requires NAD(+) as cofactor.

It is found in the cytoplasm. It carries out the reaction S-adenosyl-L-homocysteine + H2O = L-homocysteine + adenosine. It functions in the pathway amino-acid biosynthesis; L-homocysteine biosynthesis; L-homocysteine from S-adenosyl-L-homocysteine: step 1/1. Its function is as follows. May play a key role in the regulation of the intracellular concentration of adenosylhomocysteine. This Streptomyces griseus subsp. griseus (strain JCM 4626 / CBS 651.72 / NBRC 13350 / KCC S-0626 / ISP 5235) protein is Adenosylhomocysteinase.